A 160-amino-acid chain; its full sequence is Crossover junction endodeoxyribonuclease RuvC (160 aa).

Catalysis depends on residues Asp7, Glu73, and Asp145. Mg(2+) contacts are provided by Asp7, Glu73, and Asp145.

It belongs to the RuvC family. Homodimer which binds Holliday junction (HJ) DNA. The HJ becomes 2-fold symmetrical on binding to RuvC with unstacked arms; it has a different conformation from HJ DNA in complex with RuvA. In the full resolvosome a probable DNA-RuvA(4)-RuvB(12)-RuvC(2) complex forms which resolves the HJ. It depends on Mg(2+) as a cofactor.

It localises to the cytoplasm. It carries out the reaction Endonucleolytic cleavage at a junction such as a reciprocal single-stranded crossover between two homologous DNA duplexes (Holliday junction).. The RuvA-RuvB-RuvC complex processes Holliday junction (HJ) DNA during genetic recombination and DNA repair. Endonuclease that resolves HJ intermediates. Cleaves cruciform DNA by making single-stranded nicks across the HJ at symmetrical positions within the homologous arms, yielding a 5'-phosphate and a 3'-hydroxyl group; requires a central core of homology in the junction. The consensus cleavage sequence is 5'-(A/T)TT(C/G)-3'. Cleavage occurs on the 3'-side of the TT dinucleotide at the point of strand exchange. HJ branch migration catalyzed by RuvA-RuvB allows RuvC to scan DNA until it finds its consensus sequence, where it cleaves and resolves the cruciform DNA. This is Crossover junction endodeoxyribonuclease RuvC from Synechococcus sp. (strain CC9311).